Here is a 475-residue protein sequence, read N- to C-terminus: Probable dolichyl pyrophosphate Man9GlcNAc2 alpha-1,3-glucosyltransferase (475 aa).

8 helical membrane passes run 114 to 133 (VVSA…AYSL), 161 to 181 (GHFQ…AAIL), 235 to 255 (AVVL…LQAV), 296 to 316 (MALV…VLLF), 322 to 342 (VGFL…SFQV), 385 to 405 (LLVP…CFDS), 418 to 438 (IANI…TVPA), and 441 to 461 (KYPD…FFLF).

This sequence belongs to the ALG6/ALG8 glucosyltransferase family.

Its subcellular location is the endoplasmic reticulum membrane. It catalyses the reaction an alpha-D-Man-(1-&gt;2)-alpha-D-Man-(1-&gt;2)-alpha-D-Man-(1-&gt;3)-[alpha-D-Man-(1-&gt;2)-alpha-D-Man-(1-&gt;3)-[alpha-D-Man-(1-&gt;2)-alpha-D-Man-(1-&gt;6)]-alpha-D-Man-(1-&gt;6)]-beta-D-Man-(1-&gt;4)-beta-D-GlcNAc-(1-&gt;4)-alpha-D-GlcNAc-diphospho-di-trans,poly-cis-dolichol + a di-trans,poly-cis-dolichyl beta-D-glucosyl phosphate = an alpha-D-Glc-(1-&gt;3)-alpha-D-Man-(1-&gt;2)-alpha-D-Man-(1-&gt;2)-alpha-D-Man-(1-&gt;3)-[alpha-D-Man-(1-&gt;2)-alpha-D-Man-(1-&gt;3)-[alpha-D-Man-(1-&gt;2)-alpha-D-Man-(1-&gt;6)]-alpha-D-Man-(1-&gt;6)]-beta-D-Man-(1-&gt;4)-beta-D-GlcNAc-(1-&gt;4)-alpha-D-GlcNAc-diphospho-di-trans,poly-cis-dolichol + a di-trans,poly-cis-dolichyl phosphate + H(+). Its pathway is protein modification; protein glycosylation. Functionally, adds the first glucose residue to the lipid-linked oligosaccharide precursor for N-linked glycosylation. Transfers glucose from dolichyl phosphate glucose (Dol-P-Glc) onto the lipid-linked oligosaccharide Man(9)GlcNAc(2)-PP-Dol. Involved in cuticle differentiation. The protein is Probable dolichyl pyrophosphate Man9GlcNAc2 alpha-1,3-glucosyltransferase (gny) of Drosophila melanogaster (Fruit fly).